Here is a 340-residue protein sequence, read N- to C-terminus: Heat-inducible transcription repressor HrcA (340 aa).

The protein belongs to the HrcA family.

In terms of biological role, negative regulator of class I heat shock genes (grpE-dnaK-dnaJ and groELS operons). Prevents heat-shock induction of these operons. The polypeptide is Heat-inducible transcription repressor HrcA (Chromobacterium violaceum (strain ATCC 12472 / DSM 30191 / JCM 1249 / CCUG 213 / NBRC 12614 / NCIMB 9131 / NCTC 9757 / MK)).